Reading from the N-terminus, the 340-residue chain is Entry-fusion complex protein OPG094 (340 aa).

Residues methionine 1 to threonine 20 are disordered. The N-myristoyl glycine; by host moiety is linked to residue glycine 2. The Virion surface portion of the chain corresponds to glycine 2–aspartate 319. The helical; Signal-anchor for type II membrane protein transmembrane segment at leucine 320–isoleucine 340 threads the bilayer.

It belongs to the orthopoxvirus OPG086 family. In terms of assembly, interacts with OPG143. Component of the entry fusion complex (EFC) composed of OPG053, OPG076, OPG086, OPG094, OPG095, OPG099, OPG107, OPG143, OPG104, OPG147 and OPG155. Except for OPG095 and OPG053, each of the EFC proteins is required for assembly or stability of the complex. Post-translationally, unglycosylated because produced in viral factories instead of the classic ER -Golgi route.

It localises to the virion membrane. In terms of biological role, component of the entry fusion complex (EFC), which consists of 11 proteins. During cell infection, this complex mediates entry of the virion core into the host cytoplasm by a two-step mechanism consisting of lipid mixing of the viral and cellular membranes and subsequent pore formation. The sequence is that of Entry-fusion complex protein OPG094 (OPG094) from Variola virus.